The chain runs to 181 residues: Translation initiation factor IF-3 (181 aa).

Belongs to the IF-3 family. In terms of assembly, monomer.

The protein resides in the cytoplasm. In terms of biological role, IF-3 binds to the 30S ribosomal subunit and shifts the equilibrium between 70S ribosomes and their 50S and 30S subunits in favor of the free subunits, thus enhancing the availability of 30S subunits on which protein synthesis initiation begins. The polypeptide is Translation initiation factor IF-3 (Azotobacter vinelandii).